Here is a 301-residue protein sequence, read N- to C-terminus: Rhodopsin (301 aa).

The Extracellular portion of the chain corresponds to 1-18 (LHMIHLHWYQYPPMNPMM). A helical membrane pass occupies residues 19 to 43 (YPLLLIFMLFTGILCLAGNFVTIWV). Topologically, residues 44-55 (FMNTKSLRTPAN) are cytoplasmic. The chain crosses the membrane as a helical span at residues 56-78 (LLVVNLAMSDFLMMFTMFPPMMV). At 79 to 92 (TCYYHTWTLGPTFC) the chain is on the extracellular side. Residues Cys92 and Cys169 are joined by a disulfide bond. The chain crosses the membrane as a helical span at residues 93–115 (QVYAFLGNLCGCASIWTMVFITF). Residues 116–118 (DRY) carry the 'Ionic lock' involved in activated form stabilization motif. The Cytoplasmic portion of the chain corresponds to 116–134 (DRYNVIVKGVAGEPLSTKK). Residues 135 to 155 (ASLWILSVWVLSTAWCIAPFF) form a helical membrane-spanning segment. The Extracellular portion of the chain corresponds to 156–182 (GWNHYVPEGNLTGCGTDYLSEDILSRS). N-linked (GlcNAc...) asparagine glycosylation is present at Asn165. A helical transmembrane segment spans residues 183 to 204 (YLYIYSTWVYFLPLAITIYCYV). Residues 205–245 (FIIKAVAAHEKGMRDQAKKMGIKSLRNEEAQKTSAECRLAK) lie on the Cytoplasmic side of the membrane. Residues 246-267 (NAMTTVALWFIAWTPCLLINWV) traverse the membrane as a helical segment. Residues 268–278 (GMFARSYLSPV) lie on the Extracellular side of the membrane. Residues 279–300 (YTIWGYVFAKANAVYNPIVYAI) form a helical membrane-spanning segment. At Lys288 the chain carries N6-(retinylidene)lysine.

This sequence belongs to the G-protein coupled receptor 1 family. Opsin subfamily. In terms of assembly, homodimer. Interacts with GNAQ. Contains one covalently linked retinal chromophore.

It localises to the cell projection. The protein localises to the rhabdomere membrane. Functionally, photoreceptor required for image-forming vision at low light intensity. Can use both retinal and 3-dehydroretinal as visual pigment. Light-induced isomerization of 11-cis to all-trans retinal triggers a conformational change that activates signaling via G-proteins. Signaling via GNAQ probably mediates the activation of phospholipase C. This Cambarus hubrichti (Salem cave crayfish) protein is Rhodopsin (RHO).